Here is a 201-residue protein sequence, read N- to C-terminus: Kinetochore protein SPC24 homolog (201 aa).

Residues Asp-78–Lys-133 are a coiled coil.

This sequence belongs to the SPC24 family. In terms of assembly, component of the NDC80 complex, which consists of NDC80, NUF2, SPC24 and SPC25. As to expression, highly expressed in actively dividing tissues, such as shoot apical meristem (SAM), root apical meristem (RAM), vasculature, newly emerging leaves and inflorescence shoots.

The protein localises to the chromosome. The protein resides in the centromere. Functionally, acts as a component of the essential kinetochore-associated NDC80 complex, which is required for chromosome segregation and spindle checkpoint activity to ensure proper cell division. Required for the maintenance of plant architecture. The protein is Kinetochore protein SPC24 homolog of Arabidopsis thaliana (Mouse-ear cress).